A 450-amino-acid chain; its full sequence is Involucrin (450 aa).

The span at 1–19 shows a compositional bias: polar residues; the sequence is MSQQHTLPVTLPPTLSQEL. 3 disordered regions span residues 1 to 43, 77 to 370, and 422 to 450; these read MSQQ…LPAP, QLQQ…EQLK, and PGQV…EPEV. A compositionally biased stretch (basic and acidic residues) spans 86–108; that stretch reads QEVHLAKHQELQELQEQELHLGK. Positions 120–135 are enriched in low complexity; sequence GKQQQQQESQEQELYL. Composition is skewed to basic and acidic residues over residues 187–200 and 264–281; these read LGKR…ELHL and QELH…ELHL. Residues 295-344 show a composition bias toward low complexity; it reads GEAAAAGVTGAGPAASKAARRATGAGTAPGKAAAAAGATGAGTAATAPAT. Over residues 345–370 the composition is skewed to basic and acidic residues; the sequence is AEERQKAESLEQQLEQEKAQREEQLK.

This sequence belongs to the involucrin family. In terms of assembly, directly or indirectly cross-linked to cornifelin (CNFN). Substrate of transglutaminase. Specific glutamines or lysines are cross-linked to keratins, desmoplakin and to inter involucrin molecules. In terms of tissue distribution, keratinocytes of epidermis and other stratified squamous epithelia.

The protein resides in the cytoplasm. Functionally, part of the insoluble cornified cell envelope (CE) of stratified squamous epithelia. This Lemur catta (Ring-tailed lemur) protein is Involucrin (IVL).